Here is a 122-residue protein sequence, read N- to C-terminus: Large ribosomal subunit protein uL18 (122 aa).

This sequence belongs to the universal ribosomal protein uL18 family. As to quaternary structure, part of the 50S ribosomal subunit; part of the 5S rRNA/L5/L18/L25 subcomplex. Contacts the 5S and 23S rRNAs.

Functionally, this is one of the proteins that bind and probably mediate the attachment of the 5S RNA into the large ribosomal subunit, where it forms part of the central protuberance. This Lachnoclostridium phytofermentans (strain ATCC 700394 / DSM 18823 / ISDg) (Clostridium phytofermentans) protein is Large ribosomal subunit protein uL18.